An 835-amino-acid polypeptide reads, in one-letter code: Ubiquitin carboxyl-terminal hydrolase 26 (835 aa).

Residues Ser-102–Ser-128 form a disordered region. Polar residues predominate over residues Pro-118–Ser-128. The USP domain occupies Gln-286–Asn-816. Residue Cys-295 is the Nucleophile of the active site. The disordered stretch occupies residues Asn-597–Asn-747. 2 stretches are compositionally biased toward basic and acidic residues: residues Leu-634–Asp-652 and Lys-669–Ile-679. The segment covering Ala-683 to Thr-708 has biased composition (polar residues). The span at Gln-709–Ser-725 shows a compositional bias: low complexity. Over residues Arg-726–Asn-747 the composition is skewed to basic and acidic residues. Residue His-771 is the Proton acceptor of the active site.

The protein belongs to the peptidase C19 family. Interacts with RING1.

It localises to the nucleus. It is found in the cytoplasm. The protein resides in the cytoskeleton. The protein localises to the flagellum axoneme. The enzyme catalyses Thiol-dependent hydrolysis of ester, thioester, amide, peptide and isopeptide bonds formed by the C-terminal Gly of ubiquitin (a 76-residue protein attached to proteins as an intracellular targeting signal).. Functionally, deubiquitinase regulating several biological processes through the deubiquitination of components of these processes. Involved in somatic cell reprogramming through the 'Lys-48'-linked deubiquitination and stabilization of CBX4 and CBX6, two components of the polycomb-repressive complex 1 (PRC1). Also deubiquitinates and probably stabilizes the androgen receptor (AR), regulating the androgen receptor signaling pathway. May play a role in spermatogenesis. The protein is Ubiquitin carboxyl-terminal hydrolase 26 of Mus musculus (Mouse).